A 211-amino-acid polypeptide reads, in one-letter code: ATP phosphoribosyltransferase (211 aa).

This sequence belongs to the ATP phosphoribosyltransferase family. Short subfamily. In terms of assembly, heteromultimer composed of HisG and HisZ subunits.

It localises to the cytoplasm. The enzyme catalyses 1-(5-phospho-beta-D-ribosyl)-ATP + diphosphate = 5-phospho-alpha-D-ribose 1-diphosphate + ATP. It functions in the pathway amino-acid biosynthesis; L-histidine biosynthesis; L-histidine from 5-phospho-alpha-D-ribose 1-diphosphate: step 1/9. Functionally, catalyzes the condensation of ATP and 5-phosphoribose 1-diphosphate to form N'-(5'-phosphoribosyl)-ATP (PR-ATP). Has a crucial role in the pathway because the rate of histidine biosynthesis seems to be controlled primarily by regulation of HisG enzymatic activity. This is ATP phosphoribosyltransferase from Ectopseudomonas mendocina (strain ymp) (Pseudomonas mendocina).